The following is a 230-amino-acid chain: Large ribosomal subunit protein uL1 (230 aa).

Belongs to the universal ribosomal protein uL1 family. As to quaternary structure, part of the 50S ribosomal subunit.

Its function is as follows. Binds directly to 23S rRNA. The L1 stalk is quite mobile in the ribosome, and is involved in E site tRNA release. Protein L1 is also a translational repressor protein, it controls the translation of the L11 operon by binding to its mRNA. The chain is Large ribosomal subunit protein uL1 from Bacillus cereus (strain G9842).